Reading from the N-terminus, the 470-residue chain is Poly(A) polymerase catalytic subunit (470 aa).

Residues Asp-192 and Asp-194 contribute to the active site.

Belongs to the poxviridae poly(A) polymerase catalytic subunit family. Heterodimer of a large (catalytic) subunit and a small (regulatory) subunit.

The catalysed reaction is RNA(n) + ATP = RNA(n)-3'-adenine ribonucleotide + diphosphate. Its function is as follows. Polymerase that creates the 3'-poly(A) tail of mRNA's. The protein is Poly(A) polymerase catalytic subunit (PAPL) of Myxoma virus (strain Lausanne) (MYXV).